A 502-amino-acid chain; its full sequence is Glutamate--tRNA ligase (502 aa).

Positions 9-19 match the 'HIGH' region motif; that stretch reads PSPTGFPHVGT. The 'KMSKS' region signature appears at 250 to 254; the sequence is KLSKR. K253 contributes to the ATP binding site.

The protein belongs to the class-I aminoacyl-tRNA synthetase family. Glutamate--tRNA ligase type 1 subfamily. As to quaternary structure, monomer.

Its subcellular location is the cytoplasm. The catalysed reaction is tRNA(Glu) + L-glutamate + ATP = L-glutamyl-tRNA(Glu) + AMP + diphosphate. Catalyzes the attachment of glutamate to tRNA(Glu) in a two-step reaction: glutamate is first activated by ATP to form Glu-AMP and then transferred to the acceptor end of tRNA(Glu). This chain is Glutamate--tRNA ligase, found in Acinetobacter baumannii (strain AYE).